The sequence spans 1067 residues: Carbamoyl phosphate synthase large chain (1067 aa).

The segment at 1 to 401 (MPLNKDIKKV…AFLKGIRSLE (401 aa)) is carboxyphosphate synthetic domain. The ATP site is built by arginine 129, arginine 169, glycine 175, glycine 176, lysine 208, valine 210, glutamate 215, glycine 241, isoleucine 242, histidine 243, glutamine 284, and glutamate 298. Residues 133–327 (RDMMNRINQP…IAKVAAKIAL (195 aa)) form the ATP-grasp 1 domain. 3 residues coordinate Mg(2+): glutamine 284, glutamate 298, and asparagine 300. Positions 284, 298, and 300 each coordinate Mn(2+). The oligomerization domain stretch occupies residues 402–549 (IGKYSLEHKK…YSTYEQYDEV (148 aa)). A carbamoyl phosphate synthetic domain region spans residues 550-932 (VVSDNKKVVV…ALYKGFVGAS (383 aa)). Residues 674 to 864 (DDLLERLNIA…IVDIATRIML (191 aa)) form the ATP-grasp 2 domain. 10 residues coordinate ATP: arginine 710, lysine 749, leucine 751, glutamate 755, glycine 780, valine 781, histidine 782, serine 783, glutamine 823, and glutamate 835. Mg(2+)-binding residues include glutamine 823, glutamate 835, and asparagine 837. Positions 823, 835, and 837 each coordinate Mn(2+). Residues 933–1067 (MYTGDKGKTI…NRELEVFNLI (135 aa)) enclose the MGS-like domain. Residues 933 to 1067 (MYTGDKGKTI…NRELEVFNLI (135 aa)) form an allosteric domain region.

This sequence belongs to the CarB family. Composed of two chains; the small (or glutamine) chain promotes the hydrolysis of glutamine to ammonia, which is used by the large (or ammonia) chain to synthesize carbamoyl phosphate. Tetramer of heterodimers (alpha,beta)4. It depends on Mg(2+) as a cofactor. The cofactor is Mn(2+).

It catalyses the reaction hydrogencarbonate + L-glutamine + 2 ATP + H2O = carbamoyl phosphate + L-glutamate + 2 ADP + phosphate + 2 H(+). It carries out the reaction hydrogencarbonate + NH4(+) + 2 ATP = carbamoyl phosphate + 2 ADP + phosphate + 2 H(+). Its pathway is amino-acid biosynthesis; L-arginine biosynthesis; carbamoyl phosphate from bicarbonate: step 1/1. It functions in the pathway pyrimidine metabolism; UMP biosynthesis via de novo pathway; (S)-dihydroorotate from bicarbonate: step 1/3. Its function is as follows. Large subunit of the glutamine-dependent carbamoyl phosphate synthetase (CPSase). CPSase catalyzes the formation of carbamoyl phosphate from the ammonia moiety of glutamine, carbonate, and phosphate donated by ATP, constituting the first step of 2 biosynthetic pathways, one leading to arginine and/or urea and the other to pyrimidine nucleotides. The large subunit (synthetase) binds the substrates ammonia (free or transferred from glutamine from the small subunit), hydrogencarbonate and ATP and carries out an ATP-coupled ligase reaction, activating hydrogencarbonate by forming carboxy phosphate which reacts with ammonia to form carbamoyl phosphate. The polypeptide is Carbamoyl phosphate synthase large chain (Clostridium perfringens (strain 13 / Type A)).